The sequence spans 388 residues: Xylose isomerase (388 aa).

Active-site residues include His54 and Asp57. Mg(2+) contacts are provided by Glu181, Glu217, His220, Asp245, Asp255, Asp257, and Asp287.

This sequence belongs to the xylose isomerase family. Homotetramer. Mg(2+) is required as a cofactor.

It localises to the cytoplasm. It carries out the reaction alpha-D-xylose = alpha-D-xylulofuranose. The chain is Xylose isomerase from Streptomyces corchorusii (Streptomyces chibaensis).